A 364-amino-acid polypeptide reads, in one-letter code: Caffeic acid 3-O-methyltransferase (364 aa).

131-137 (MNQDKVL) serves as a coordination point for substrate. The interval 163-181 (AFEYHGTDSRFNRVFNEGM) is substrate binding. Residues Gly209, Asp232, Asp252, Met253, and Lys266 each coordinate S-adenosyl-L-methionine. His270 acts as the Proton acceptor in catalysis.

This sequence belongs to the class I-like SAM-binding methyltransferase superfamily. Cation-independent O-methyltransferase family. COMT subfamily. Homodimer. As to expression, confined to the vascular tissues of organs undergoing lignification such as stems and roots.

The enzyme catalyses (E)-caffeate + S-adenosyl-L-methionine = (E)-ferulate + S-adenosyl-L-homocysteine + H(+). It catalyses the reaction tricetin + 2 S-adenosyl-L-methionine = 3',5'-di-O-methyltricetin + 2 S-adenosyl-L-homocysteine + 2 H(+). It carries out the reaction luteolin + S-adenosyl-L-methionine = chrysoeriol + S-adenosyl-L-homocysteine + H(+). The catalysed reaction is tricetin + S-adenosyl-L-methionine = 3'-O-methyltricetin + S-adenosyl-L-homocysteine + H(+). It participates in aromatic compound metabolism; phenylpropanoid biosynthesis. Functionally, catalyzes the conversion of caffeic acid to ferulic acid and of 5-hydroxyferulic acid to sinapic acid. The resulting products may subsequently be converted to the corresponding alcohols that are incorporated into lignins. Can use the flavone tricetin (5,7,3',4',5'-pentahydroxyflavone) as the preferred substrate and give rise to its 3',5'-dimethyl derivative, tricin (3',5'-dimethoxy-5,7,4'-trihydroxyflavone), as the major product, and selgin to a lower extent. Tricin exhibits potential benefits for human health including relaxant effect on smooth muscle of intestinal tissues, antioxidant effect, antihistaminic activity, and growth inhibition of human malignant breast tumor cells and colon cancer cells. Can also use luteolin, quercetin and 5-hydroxyferulic acid (5HF) as substrates. This is Caffeic acid 3-O-methyltransferase from Zea mays (Maize).